The primary structure comprises 297 residues: UDP-N-acetylenolpyruvoylglucosamine reductase (297 aa).

The FAD-binding PCMH-type domain occupies 26 to 191; it reads KSGGTADWLF…VAARFRGHPG (166 aa). Residue Arg171 is part of the active site. The active-site Proton donor is Ser220. The active site involves Glu290.

This sequence belongs to the MurB family. Requires FAD as cofactor.

The protein localises to the cytoplasm. It carries out the reaction UDP-N-acetyl-alpha-D-muramate + NADP(+) = UDP-N-acetyl-3-O-(1-carboxyvinyl)-alpha-D-glucosamine + NADPH + H(+). Its pathway is cell wall biogenesis; peptidoglycan biosynthesis. In terms of biological role, cell wall formation. The chain is UDP-N-acetylenolpyruvoylglucosamine reductase from Novosphingobium aromaticivorans (strain ATCC 700278 / DSM 12444 / CCUG 56034 / CIP 105152 / NBRC 16084 / F199).